Consider the following 105-residue polypeptide: DNA-binding protein HU (105 aa).

It belongs to the bacterial histone-like protein family.

Its function is as follows. Histone-like DNA-binding protein which is capable of wrapping DNA to stabilize it, and thus to prevent its denaturation under extreme environmental conditions. The sequence is that of DNA-binding protein HU (hup) from Treponema pallidum (strain Nichols).